Consider the following 124-residue polypeptide: S-adenosylmethionine decarboxylase proenzyme (124 aa).

S63 (schiff-base intermediate with substrate; via pyruvic acid) is an active-site residue. A Pyruvic acid (Ser); by autocatalysis modification is found at S63. H68 functions as the Proton acceptor; for processing activity in the catalytic mechanism. The active-site Proton donor; for catalytic activity is C83.

It belongs to the prokaryotic AdoMetDC family. Type 1 subfamily. As to quaternary structure, heterotetramer of two alpha and two beta chains arranged as a dimer of alpha/beta heterodimers. It depends on pyruvate as a cofactor. Post-translationally, is synthesized initially as an inactive proenzyme. Formation of the active enzyme involves a self-maturation process in which the active site pyruvoyl group is generated from an internal serine residue via an autocatalytic post-translational modification. Two non-identical subunits are generated from the proenzyme in this reaction, and the pyruvate is formed at the N-terminus of the alpha chain, which is derived from the carboxyl end of the proenzyme. The post-translation cleavage follows an unusual pathway, termed non-hydrolytic serinolysis, in which the side chain hydroxyl group of the serine supplies its oxygen atom to form the C-terminus of the beta chain, while the remainder of the serine residue undergoes an oxidative deamination to produce ammonia and the pyruvoyl group blocking the N-terminus of the alpha chain.

It carries out the reaction S-adenosyl-L-methionine + H(+) = S-adenosyl 3-(methylsulfanyl)propylamine + CO2. It functions in the pathway amine and polyamine biosynthesis; S-adenosylmethioninamine biosynthesis; S-adenosylmethioninamine from S-adenosyl-L-methionine: step 1/1. Functionally, catalyzes the decarboxylation of S-adenosylmethionine to S-adenosylmethioninamine (dcAdoMet), the propylamine donor required for the synthesis of the polyamines spermine and spermidine from the diamine putrescine. This is S-adenosylmethionine decarboxylase proenzyme from Geobacillus kaustophilus (strain HTA426).